Reading from the N-terminus, the 338-residue chain is MKKEFDFILIGRITIDFNPMDYYNNLENSSLFKKYIGGSAANIAIGLSRLKNKVGFFGSVSDDQFGNFVLNVFEKEKIDISHIKKTKDHKLGLTFTEMLSEEKSTILMYRDNVADLQIDVSDIDLDYILRTKILVISGTSLAKSPSREAVLKALFLAKNNGIKVVFDIDYRPYSWKNLDEVSLYYQIVAQNSDLIIGSYEEIQLTSRFCLENPENLIDDDYAKYWLKFVDLIIIKNGKKGSKLYQKDKKLVAKVVPVKMLKGYGGGDAYASLFLDHYLKNESDLENGLALATSAASIMVQSHSSFDLPDYQKILEFKDNALKSDPDLVQKKEWNAFKK.

Belongs to the carbohydrate kinase PfkB family.

The catalysed reaction is 5-dehydro-2-deoxy-D-gluconate + ATP = 6-phospho-5-dehydro-2-deoxy-D-gluconate + ADP + H(+). It functions in the pathway polyol metabolism; myo-inositol degradation into acetyl-CoA; acetyl-CoA from myo-inositol: step 5/7. Its function is as follows. Catalyzes the phosphorylation of 5-dehydro-2-deoxy-D-gluconate (2-deoxy-5-keto-D-gluconate or DKG) to 6-phospho-5-dehydro-2-deoxy-D-gluconate (DKGP). This is 5-dehydro-2-deoxygluconokinase from Mesomycoplasma hyopneumoniae (strain 232) (Mycoplasma hyopneumoniae).